Here is a 249-residue protein sequence, read N- to C-terminus: Methylthioribulose-1-phosphate dehydratase (249 aa).

Residues His103 and His105 each contribute to the Zn(2+) site.

The protein belongs to the aldolase class II family. MtnB subfamily. Zn(2+) is required as a cofactor.

The enzyme catalyses 5-(methylsulfanyl)-D-ribulose 1-phosphate = 5-methylsulfanyl-2,3-dioxopentyl phosphate + H2O. It functions in the pathway amino-acid biosynthesis; L-methionine biosynthesis via salvage pathway; L-methionine from S-methyl-5-thio-alpha-D-ribose 1-phosphate: step 2/6. Its function is as follows. Catalyzes the dehydration of methylthioribulose-1-phosphate (MTRu-1-P) into 2,3-diketo-5-methylthiopentyl-1-phosphate (DK-MTP-1-P). The protein is Methylthioribulose-1-phosphate dehydratase of Leptospira interrogans serogroup Icterohaemorrhagiae serovar copenhageni (strain Fiocruz L1-130).